Consider the following 162-residue polypeptide: Protein-export protein SecB (162 aa).

This sequence belongs to the SecB family. Homotetramer, a dimer of dimers. One homotetramer interacts with 1 SecA dimer.

It is found in the cytoplasm. Functionally, one of the proteins required for the normal export of preproteins out of the cell cytoplasm. It is a molecular chaperone that binds to a subset of precursor proteins, maintaining them in a translocation-competent state. It also specifically binds to its receptor SecA. In Bradyrhizobium sp. (strain BTAi1 / ATCC BAA-1182), this protein is Protein-export protein SecB.